The following is a 304-amino-acid chain: N-carbamoyl-D-amino acid hydrolase (304 aa).

One can recognise a CN hydrolase domain in the interval methionine 5–leucine 276. Residues glutamate 47, lysine 127, and cysteine 172 contribute to the active site.

In terms of assembly, homotetramer.

It carries out the reaction an N-carbamoyl-D-amino acid + H2O + 2 H(+) = a D-alpha-amino acid + NH4(+) + CO2. With respect to regulation, the activity decreases with increasing concentration of H(2)O(2). Has 68% and 43% of activity remaining upon treatment with 0.1 and 0.2 mM H(2)O(2) for 30 minutes, respectively. Inhibited significantly by 2 mM Zn(2+), Cu(2+) and Ag(+), moderately by Co(2+), Mn(2+), Sn(2+) and Mg(2+), and only slightly by Ba(2+). Slightly activated by Fe(2+) and Ca(2+). No effect on activity by metal chelators EDTA and 8-hydroxyquinoline at 2 mM or by dithiothreitol, 2-mercaptoethanol or phenylmethanesulfonyl fluoride. Functionally, catalyzes the hydrolysis of N-carbamoyl-D-amino acids to the corresponding D-amino acids. Hydrolyzes aromatic and aliphatic N-carbamoyl-D-amino acids in vitro. Effectively hydrolyzes N-carbamoyl-D-p-hydroxyphenylglycine and N-carbamoyl-DL-p-hydroxyphenylglycine, and to a lesser extent N-carbamoyl-D-methionine. No activity for N-carbamoyl-L-amino acids, N-carbamoyl-beta-alanine or (RS)-alpha-ethyl-N-carbamoylphenylglycine in vitro. The sequence is that of N-carbamoyl-D-amino acid hydrolase from Ensifer adhaerens (Sinorhizobium morelense).